The primary structure comprises 450 residues: Flavin-containing monooxygenase FMO GS-OX-like 3 (450 aa).

FAD is bound at residue 17–22 (GAGPAG). Residue 215–220 (GNSSSA) participates in NADP(+) binding.

This sequence belongs to the FMO family. It depends on FAD as a cofactor.

Functionally, catalyzes the conversion of methylthioalkyl glucosinolates of any chain length into methylsulfinylalkyl glucosinolates. The polypeptide is Flavin-containing monooxygenase FMO GS-OX-like 3 (Arabidopsis thaliana (Mouse-ear cress)).